A 71-amino-acid chain; its full sequence is Large ribosomal subunit protein bL31 (71 aa).

The Zn(2+) site is built by Cys-16, Cys-18, Cys-36, and Cys-39.

This sequence belongs to the bacterial ribosomal protein bL31 family. Type A subfamily. In terms of assembly, part of the 50S ribosomal subunit. The cofactor is Zn(2+).

Its function is as follows. Binds the 23S rRNA. The sequence is that of Large ribosomal subunit protein bL31 from Pseudothermotoga lettingae (strain ATCC BAA-301 / DSM 14385 / NBRC 107922 / TMO) (Thermotoga lettingae).